Reading from the N-terminus, the 369-residue chain is Pyrimidine monooxygenase RutA (369 aa).

FMN contacts are provided by residues 49–50, Asn-115, Glu-124, 140–141, and Ser-190; these read IK and RY.

The protein belongs to the NtaA/SnaA/DszA monooxygenase family. RutA subfamily.

It carries out the reaction uracil + FMNH2 + NADH + O2 = (Z)-3-ureidoacrylate + FMN + NAD(+) + H2O + H(+). It catalyses the reaction thymine + FMNH2 + NADH + O2 = (Z)-2-methylureidoacrylate + FMN + NAD(+) + H2O + H(+). Catalyzes the pyrimidine ring opening between N-3 and C-4 by an unusual flavin hydroperoxide-catalyzed mechanism, adding oxygen atoms in the process to yield ureidoacrylate peracid, that immediately reacts with FMN forming ureidoacrylate and FMN-N(5)-oxide. The FMN-N(5)-oxide reacts spontaneously with NADH to produce FMN. Requires the flavin reductase RutF to regenerate FMN in vivo. This is Pyrimidine monooxygenase RutA from Acinetobacter baylyi (strain ATCC 33305 / BD413 / ADP1).